Reading from the N-terminus, the 294-residue chain is Bifunctional protein FolD (294 aa).

NADP(+) is bound by residues 166–168 (GRS), S191, and I232.

The protein belongs to the tetrahydrofolate dehydrogenase/cyclohydrolase family. Homodimer.

The catalysed reaction is (6R)-5,10-methylene-5,6,7,8-tetrahydrofolate + NADP(+) = (6R)-5,10-methenyltetrahydrofolate + NADPH. It catalyses the reaction (6R)-5,10-methenyltetrahydrofolate + H2O = (6R)-10-formyltetrahydrofolate + H(+). Its pathway is one-carbon metabolism; tetrahydrofolate interconversion. Functionally, catalyzes the oxidation of 5,10-methylenetetrahydrofolate to 5,10-methenyltetrahydrofolate and then the hydrolysis of 5,10-methenyltetrahydrofolate to 10-formyltetrahydrofolate. In Bradyrhizobium sp. (strain BTAi1 / ATCC BAA-1182), this protein is Bifunctional protein FolD.